Reading from the N-terminus, the 403-residue chain is PP2A regulatory subunit TAP46 (403 aa).

Disordered regions lie at residues 158 to 184 and 351 to 403; these read ERRG…LDDD and ANSS…TPCG. Acidic residues-rich tracts occupy residues 174 to 184 and 366 to 375; these read ETEEDDVLDDD and EDDEEDDDDA. Basic and acidic residues predominate over residues 376–391; that stretch reads AQDKARAWDDWKDDNP.

This sequence belongs to the IGBP1/TAP42 family.

In terms of biological role, involved in the regulation of the TOR signaling pathway. Seems to act as a regulator of PP2A catalytic activity. This Nicotiana tabacum (Common tobacco) protein is PP2A regulatory subunit TAP46.